Here is a 100-residue protein sequence, read N- to C-terminus: Large ribosomal subunit protein uL23 (100 aa).

Belongs to the universal ribosomal protein uL23 family. In terms of assembly, part of the 50S ribosomal subunit. Contacts protein L29, and trigger factor when it is bound to the ribosome.

Functionally, one of the early assembly proteins it binds 23S rRNA. One of the proteins that surrounds the polypeptide exit tunnel on the outside of the ribosome. Forms the main docking site for trigger factor binding to the ribosome. In Lactobacillus acidophilus (strain ATCC 700396 / NCK56 / N2 / NCFM), this protein is Large ribosomal subunit protein uL23.